Here is a 97-residue protein sequence, read N- to C-terminus: Putative membrane protein insertion efficiency factor (97 aa).

The protein belongs to the UPF0161 family.

The protein resides in the cell membrane. Functionally, could be involved in insertion of integral membrane proteins into the membrane. The chain is Putative membrane protein insertion efficiency factor from Lactobacillus gasseri (strain ATCC 33323 / DSM 20243 / BCRC 14619 / CIP 102991 / JCM 1131 / KCTC 3163 / NCIMB 11718 / NCTC 13722 / AM63).